The chain runs to 125 residues: Small ribosomal subunit protein eS6 (125 aa).

The protein belongs to the eukaryotic ribosomal protein eS6 family. Part of the 30S ribosomal subunit.

The sequence is that of Small ribosomal subunit protein eS6 from Thermococcus kodakarensis (strain ATCC BAA-918 / JCM 12380 / KOD1) (Pyrococcus kodakaraensis (strain KOD1)).